We begin with the raw amino-acid sequence, 51 residues long: Large ribosomal subunit protein eL39z (51 aa).

This sequence belongs to the eukaryotic ribosomal protein eL39 family.

This chain is Large ribosomal subunit protein eL39z (RPL39A), found in Oryza sativa subsp. japonica (Rice).